A 119-amino-acid chain; its full sequence is MGDNHQATLSNDPAANAPDAAAADKGKGKAADEPSLEMSMDEEEDSDESEAEEMVNDDDDDHDNLEPISEENIISGGRRTRGKTIDFQEAAEKLKAEDEMDDEDDDDEEFQPNDEDMRD.

A compositionally biased stretch (polar residues) spans 1-10; the sequence is MGDNHQATLS. The interval 1-119 is disordered; sequence MGDNHQATLS…FQPNDEDMRD (119 aa). The span at 11-21 shows a compositional bias: low complexity; it reads NDPAANAPDAA. The span at 22–32 shows a compositional bias: basic and acidic residues; that stretch reads AADKGKGKAAD. The span at 39-63 shows a compositional bias: acidic residues; the sequence is SMDEEEDSDESEAEEMVNDDDDDHD. Positions 83–97 are enriched in basic and acidic residues; sequence KTIDFQEAAEKLKAE. Residues 98–119 show a composition bias toward acidic residues; sequence DEMDDEDDDDEEFQPNDEDMRD.

This sequence belongs to the CHZ1 family. Forms a heterotrimer with H2A.Z-H2B, stabilizing the association of the histone dimer. Also, with a lower affinity, forms a heterotrimer with H2A-H2B.

It is found in the nucleus. Functionally, forms a chaperone-bound H2A.Z-H2B complex that acts as a source for SWR1 complex-dependent H2A to H2A.Z histone replacement in chromatin. The protein is Histone H2A.Z-specific chaperone chz1 (chz1) of Neosartorya fischeri (strain ATCC 1020 / DSM 3700 / CBS 544.65 / FGSC A1164 / JCM 1740 / NRRL 181 / WB 181) (Aspergillus fischerianus).